Here is a 91-residue protein sequence, read N- to C-terminus: Non-specific lipid-transfer protein 1 (91 aa).

4 disulfides stabilise this stretch: cysteine 3–cysteine 50, cysteine 13–cysteine 27, cysteine 28–cysteine 73, and cysteine 48–cysteine 87.

It belongs to the plant LTP family.

In terms of biological role, plant non-specific lipid-transfer proteins transfer phospholipids as well as galactolipids across membranes. May play a role in wax or cutin deposition in the cell walls of expanding epidermal cells and certain secretory tissues. In Morus nigra (Black mulberry), this protein is Non-specific lipid-transfer protein 1.